The following is a 471-amino-acid chain: Adenosylhomocysteinase (471 aa).

Substrate is bound by residues T60, D135, and E196. An NAD(+)-binding site is contributed by 197–199; sequence TTT. The substrate site is built by K226 and D230. NAD(+) contacts are provided by residues N231, 260–265, E283, N318, 339–341, and N387; these read GYGDVG and IGH.

It belongs to the adenosylhomocysteinase family. NAD(+) serves as cofactor.

Its subcellular location is the cytoplasm. It catalyses the reaction S-adenosyl-L-homocysteine + H2O = L-homocysteine + adenosine. Its pathway is amino-acid biosynthesis; L-homocysteine biosynthesis; L-homocysteine from S-adenosyl-L-homocysteine: step 1/1. Its function is as follows. May play a key role in the regulation of the intracellular concentration of adenosylhomocysteine. This chain is Adenosylhomocysteinase, found in Chlorobium luteolum (strain DSM 273 / BCRC 81028 / 2530) (Pelodictyon luteolum).